The following is a 378-amino-acid chain: Uroporphyrinogen decarboxylase (378 aa).

Substrate-binding positions include 40–44 (RQAGR), Asp-90, Tyr-167, Ser-222, and His-355.

The protein belongs to the uroporphyrinogen decarboxylase family. As to quaternary structure, homodimer.

The protein localises to the cytoplasm. The enzyme catalyses uroporphyrinogen III + 4 H(+) = coproporphyrinogen III + 4 CO2. It functions in the pathway porphyrin-containing compound metabolism; protoporphyrin-IX biosynthesis; coproporphyrinogen-III from 5-aminolevulinate: step 4/4. In terms of biological role, catalyzes the decarboxylation of four acetate groups of uroporphyrinogen-III to yield coproporphyrinogen-III. The chain is Uroporphyrinogen decarboxylase from Psychrobacter arcticus (strain DSM 17307 / VKM B-2377 / 273-4).